The following is a 456-amino-acid chain: Anthranilate synthase component 1 (456 aa).

L-tryptophan-binding positions include Ser-31 and 244–246 (SYM). 279-280 (GT) serves as a coordination point for chorismate. Glu-306 contributes to the Mg(2+) binding site. Chorismate is bound by residues Tyr-394, Arg-414, 428–430 (GAG), and Gly-430. Glu-443 is a binding site for Mg(2+).

It belongs to the anthranilate synthase component I family. In terms of assembly, heterotetramer consisting of two non-identical subunits: a beta subunit (TrpG) and a large alpha subunit (TrpE). Requires Mg(2+) as cofactor.

It carries out the reaction chorismate + L-glutamine = anthranilate + pyruvate + L-glutamate + H(+). The protein operates within amino-acid biosynthesis; L-tryptophan biosynthesis; L-tryptophan from chorismate: step 1/5. With respect to regulation, feedback inhibited by tryptophan. Part of a heterotetrameric complex that catalyzes the two-step biosynthesis of anthranilate, an intermediate in the biosynthesis of L-tryptophan. In the first step, the glutamine-binding beta subunit (TrpG) of anthranilate synthase (AS) provides the glutamine amidotransferase activity which generates ammonia as a substrate that, along with chorismate, is used in the second step, catalyzed by the large alpha subunit of AS (TrpE) to produce anthranilate. In the absence of TrpG, TrpE can synthesize anthranilate directly from chorismate and high concentrations of ammonia. This chain is Anthranilate synthase component 1 (trpE), found in Lactococcus lactis subsp. lactis (strain IL1403) (Streptococcus lactis).